The following is a 469-amino-acid chain: Solute carrier family 52, riboflavin transporter, member 3 (469 aa).

The Cytoplasmic portion of the chain corresponds to 1–6 (MALLTH). The helical transmembrane segment at 7-27 (LLVCTFGMGSWVAINGLWVEL) threads the bilayer. At 28–43 (PLLVTELPEGWYLPSY) the chain is on the extracellular side. The helical transmembrane segment at 44-64 (LTMVIQLANIGPLLVTLLHHF) threads the bilayer. Topologically, residues 65-71 (QPSCLSE) are cytoplasmic. A helical transmembrane segment spans residues 72-92 (VPIIFTVLAVGTVACALFAFL). The Extracellular portion of the chain corresponds to 93–105 (WNVTSWVLDGRHS). An N-linked (GlcNAc...) asparagine glycan is attached at asparagine 94. A helical membrane pass occupies residues 106-126 (IAFMVLTFFLALVDCTSSVTF). The Cytoplasmic segment spans residues 127-137 (LPFMSRLPACY). Residues 138 to 158 (LTTFFVGEGLSSLLPALVALA) traverse the membrane as a helical segment. The Extracellular segment spans residues 159–220 (QGSGLTTCVN…SRYLPANFSP (62 aa)). N-linked (GlcNAc...) asparagine glycosylation occurs at asparagine 168. Residues 221 to 241 (LVFFLLLSFMMACCLAAFFLL) traverse the membrane as a helical segment. Residues 242–297 (QRQPRPRESSIEDLLTSQVTLHSIRPREGDDLGPPDPGPSSKAQGLPEEKTASDHP) are Cytoplasmic-facing. A Phosphoserine modification is found at serine 251. Residues 266 to 290 (RPREGDDLGPPDPGPSSKAQGLPEE) are disordered. A helical membrane pass occupies residues 298–318 (AHLAFIYVLVAFVNALTNGVL). Residues 319 to 335 (PSVQTYSCLSYGPVAYH) are Extracellular-facing. The chain crosses the membrane as a helical span at residues 336-356 (LSATLSSMANPLACFLSMFLP). The Cytoplasmic segment spans residues 357–361 (HRSLP). The chain crosses the membrane as a helical span at residues 362–382 (FLGVLTVLGTGFGAYNMAMAV). Residues 383-396 (MSPCPLMQGHWAGE) are Extracellular-facing. Residues 397–417 (ILIVASWVLFIGCLSYVKVML) form a helical membrane-spanning segment. At 418-427 (GVILRDRSRS) the chain is on the cytoplasmic side. The helical transmembrane segment at 428 to 448 (ALVWCGAAVQLGSLLGALLMF) threads the bilayer. The Extracellular segment spans residues 449-469 (PLVNVLRLFSSADFCSLQCSA).

This sequence belongs to the riboflavin transporter family.

It is found in the cell membrane. It catalyses the reaction riboflavin(in) = riboflavin(out). Its function is as follows. Plasma membrane transporter mediating the uptake by cells of the water soluble vitamin B2/riboflavin that plays a key role in biochemical oxidation-reduction reactions of the carbohydrate, lipid, and amino acid metabolism. The sequence is that of Solute carrier family 52, riboflavin transporter, member 3 (SLC52A3) from Ailuropoda melanoleuca (Giant panda).